The sequence spans 952 residues: Microtubule-associated protein 6 (952 aa).

The tract at residues 1–15 (MAWPCITRACCIARF) is calmodulin-binding. S-palmitoyl cysteine attachment occurs at residues Cys5, Cys10, and Cys11. Disordered regions lie at residues 37 to 457 (TEHP…RAVA) and 486 to 952 (IKPV…EGSP). The span at 41 to 55 (GAPPQPPAPPQPGLA) shows a compositional bias: pro residues. The residue at position 98 (Ser98) is a Phosphoserine. Low complexity predominate over residues 105 to 117 (ASGSTSGSGPADS). A mn 1 region spans residues 116-139 (DSVMRQDYRAWKVQRPEPSCRPRS). Over residues 119-139 (MRQDYRAWKVQRPEPSCRPRS) the composition is skewed to basic and acidic residues. Residues 124–138 (RAWKVQRPEPSCRPR) form a calmodulin-binding region. At Tyr141 the chain carries Phosphotyrosine. A compositionally biased stretch (basic and acidic residues) spans 147 to 171 (PFERETQYQKDFRAWPLPRRGDHPW). Positions 151-174 (ETQYQKDFRAWPLPRRGDHPWIPK) are mn 2. A calmodulin-binding region spans residues 160–174 (AWPLPRRGDHPWIPK). Ser185 carries the phosphoserine modification. A calmodulin-binding region spans residues 187–201 (PVLGMPKRRPQSQER). Ser207 bears the Phosphoserine mark. Low complexity predominate over residues 221 to 230 (VPAAGKASGA). The Mc-1 repeat unit spans residues 222 to 267 (PAAGKASGADQRDTRRKAGPAWMVTRTEGHEEKPLPPAQSQTQEGG). Residues 222-451 (PAAGKASGAD…HAQGTGPEGG (230 aa)) are 5 X approximate tandem repeat Mc. Calmodulin-binding stretches follow at residues 235-249 (TRRK…TRTE), 280-294 (DTRR…VTRT), 325-339 (RDTR…MVTR), 373-387 (TRRK…TRTE), 421-435 (RKAG…SEGH), 481-495 (RAWT…IKAK), 532-546 (RRRI…FKES), and 559-573 (PKKT…RKAK). The stretch at 268-313 (PAAGKASGADQRDTRRKAGPAWMVTRTEGHEEKPLPPAQSQTQEGG) is one Mc-2 repeat. A Mc-3 repeat occupies 314–359 (PAAGKASGADQRDTRRKAGPAWMVTRTEGHEETPLPPAQSQTQEGG). Residues 360–405 (PAAGKASGADQRDTRRKAGPAWMVTRTEGHEETPLPPAQSQTQEGG) form a Mc-4 repeat. A Mc-5 repeat occupies 406 to 451 (PAAGKASGADERDTRRKAGPAWMVRRSEGHEQTTAAHAQGTGPEGG). A mn 3 region spans residues 473-496 (SSSYRNEFRAWTDIKPVKPIKAKP). Residues 542–551 (PFKESPKVEK) show a composition bias toward basic and acidic residues. A compositionally biased stretch (low complexity) spans 552–567 (PSVQSSKPKKTSTSQK). A Phosphoserine modification is found at Ser590. Residues 595–621 (KPDDKEQSKEMNNKLAEAKESRVKPTS) show a composition bias toward basic and acidic residues. Ser681 is subject to Phosphoserine. Residues 711–725 (KDQDHMASELLKNKD) show a composition bias toward basic and acidic residues. Ser736 carries the post-translational modification Phosphoserine. The span at 761–775 (APAPTPLKDPGPVIP) shows a compositional bias: pro residues. Composition is skewed to basic and acidic residues over residues 776-792 (EPEK…RKDQ) and 821-831 (PAKDTGTDLKG). Residues 903-915 (VPAPTKDPGPTAP) show a composition bias toward pro residues. Ser951 is modified (phosphoserine).

Belongs to the STOP family. Interacts with calmodulin (via C-terminus); the interaction is dependent on Ca(2+). Interacts (via C-terminus) with TMEM106B (via N-terminus). Interacts with ZDHHC13 (via ANK repeats). Interacts with ZDHHC17 (via ANK repeats). Palmitoylated. Probably depalmitoylated by ABHD17A, ABHD17B and ABHD17C. During neuronal polarization, palmitoylation and depalmitoylation cycles regulate MAP6 shuttling between secretory vesicles and microtubules, and its polarized distribution in the axon. As to expression, isoform 1 is specifically expressed in adult brain. Isoform 2 is predominantly expressed in embryonic brain; expression persists at low levels in the adult brain.

It is found in the cytoplasm. The protein localises to the cytoskeleton. It localises to the golgi apparatus. The protein resides in the cell projection. Its subcellular location is the axon. It is found in the dendrite. The protein localises to the cytoplasmic vesicle. It localises to the secretory vesicle membrane. Involved in microtubule stabilization in many cell types, including neuronal cells. Specifically has microtubule cold stabilizing activity. Involved in dendrite morphogenesis and maintenance by regulating lysosomal trafficking via its interaction with TMEM106B. Regulates KIF5A-mediated axonal cargo transport. Regulates axonal growth during neuron polarization. The polypeptide is Microtubule-associated protein 6 (Map6) (Rattus norvegicus (Rat)).